A 641-amino-acid chain; its full sequence is Histone-lysine N-methyltransferase set9 (641 aa).

The SET domain maps to 120–234 (CPFEVTTTNR…IGEEITVSYG (115 aa)). Disordered stretches follow at residues 261 to 388 (NLAP…STAA) and 596 to 628 (GVSF…NTRV). The segment covering 348-359 (AGDSGKSSSAGD) has biased composition (low complexity). Positions 361–381 (VESSGTDSESLTSITPQESQR) are enriched in polar residues. Residues 608 to 625 (SDMRSETPDSEALDERGN) are compositionally biased toward basic and acidic residues.

This sequence belongs to the class V-like SAM-binding methyltransferase superfamily. Histone-lysine methyltransferase family. Suvar4-20 subfamily.

Its subcellular location is the nucleus. It is found in the chromosome. The enzyme catalyses L-lysyl(20)-[histone H4] + 3 S-adenosyl-L-methionine = N(6),N(6),N(6)-trimethyl-L-lysyl(20)-[histone H4] + 3 S-adenosyl-L-homocysteine + 3 H(+). Its function is as follows. Histone methyltransferase that trimethylates 'Lys-20' of histone H4 to form H4K20me3. The chain is Histone-lysine N-methyltransferase set9 (set9) from Emericella nidulans (strain FGSC A4 / ATCC 38163 / CBS 112.46 / NRRL 194 / M139) (Aspergillus nidulans).